Reading from the N-terminus, the 310-residue chain is 4-hydroxy-3-methylbut-2-enyl diphosphate reductase (310 aa).

A [4Fe-4S] cluster-binding site is contributed by C13. Residues H42 and H75 each contribute to the (2E)-4-hydroxy-3-methylbut-2-enyl diphosphate site. Residues H42 and H75 each coordinate dimethylallyl diphosphate. Isopentenyl diphosphate is bound by residues H42 and H75. Residue C97 coordinates [4Fe-4S] cluster. H125 serves as a coordination point for (2E)-4-hydroxy-3-methylbut-2-enyl diphosphate. Position 125 (H125) interacts with dimethylallyl diphosphate. Residue H125 coordinates isopentenyl diphosphate. E127 (proton donor) is an active-site residue. T165 contributes to the (2E)-4-hydroxy-3-methylbut-2-enyl diphosphate binding site. C195 is a [4Fe-4S] cluster binding site. Residues S223, S224, N225, and S267 each contribute to the (2E)-4-hydroxy-3-methylbut-2-enyl diphosphate site. Positions 223, 224, 225, and 267 each coordinate dimethylallyl diphosphate. Positions 223, 224, 225, and 267 each coordinate isopentenyl diphosphate.

This sequence belongs to the IspH family. The cofactor is [4Fe-4S] cluster.

It carries out the reaction isopentenyl diphosphate + 2 oxidized [2Fe-2S]-[ferredoxin] + H2O = (2E)-4-hydroxy-3-methylbut-2-enyl diphosphate + 2 reduced [2Fe-2S]-[ferredoxin] + 2 H(+). It catalyses the reaction dimethylallyl diphosphate + 2 oxidized [2Fe-2S]-[ferredoxin] + H2O = (2E)-4-hydroxy-3-methylbut-2-enyl diphosphate + 2 reduced [2Fe-2S]-[ferredoxin] + 2 H(+). It functions in the pathway isoprenoid biosynthesis; dimethylallyl diphosphate biosynthesis; dimethylallyl diphosphate from (2E)-4-hydroxy-3-methylbutenyl diphosphate: step 1/1. Its pathway is isoprenoid biosynthesis; isopentenyl diphosphate biosynthesis via DXP pathway; isopentenyl diphosphate from 1-deoxy-D-xylulose 5-phosphate: step 6/6. Functionally, catalyzes the conversion of 1-hydroxy-2-methyl-2-(E)-butenyl 4-diphosphate (HMBPP) into a mixture of isopentenyl diphosphate (IPP) and dimethylallyl diphosphate (DMAPP). Acts in the terminal step of the DOXP/MEP pathway for isoprenoid precursor biosynthesis. The chain is 4-hydroxy-3-methylbut-2-enyl diphosphate reductase from Chlamydia pneumoniae (Chlamydophila pneumoniae).